A 458-amino-acid polypeptide reads, in one-letter code: Argininosuccinate lyase (458 aa).

It belongs to the lyase 1 family. Argininosuccinate lyase subfamily.

It is found in the cytoplasm. It catalyses the reaction 2-(N(omega)-L-arginino)succinate = fumarate + L-arginine. It functions in the pathway amino-acid biosynthesis; L-arginine biosynthesis; L-arginine from L-ornithine and carbamoyl phosphate: step 3/3. In Salmonella typhi, this protein is Argininosuccinate lyase.